The chain runs to 125 residues: Desulfoferrodoxin (125 aa).

The Fe cation site is built by His49, His69, His75, Cys115, and His118.

This sequence belongs to the desulfoferrodoxin family. Cu(2+) serves as cofactor.

It catalyses the reaction reduced [rubredoxin] + superoxide + 2 H(+) = oxidized [rubredoxin] + H2O2. Its function is as follows. Catalyzes the reduction of superoxide to hydrogen peroxide, using electrons from NADH and NADH:rubredoxin oxidoreductase (NROR) and rubredoxin (Rd) as electron transport intermediaries between NADH and Dfx. Is a key factor in the superoxide reductase dependent part of a pathway for detoxification of reactive oxygen species (ROS) in C.acetobutylicum, an obligate anaerobic bacterium. This chain is Desulfoferrodoxin (dfx), found in Clostridium acetobutylicum (strain ATCC 824 / DSM 792 / JCM 1419 / IAM 19013 / LMG 5710 / NBRC 13948 / NRRL B-527 / VKM B-1787 / 2291 / W).